The primary structure comprises 227 residues: UPF0441 protein YPO0661/y3517/YP_2976 (227 aa).

The interval 198-227 (GGFGESVAKQSSMQRSAATSSKTTTRSMGG) is disordered. The segment covering 212-227 (RSAATSSKTTTRSMGG) has biased composition (low complexity).

This sequence belongs to the UPF0441 family.

In Yersinia pestis, this protein is UPF0441 protein YPO0661/y3517/YP_2976.